The sequence spans 293 residues: Nucleotide-binding protein Csac_1160 (293 aa).

11 to 18 (GMSGAGKS) contacts ATP. 62–65 (DIRG) is a GTP binding site.

Belongs to the RapZ-like family.

Its function is as follows. Displays ATPase and GTPase activities. This Caldicellulosiruptor saccharolyticus (strain ATCC 43494 / DSM 8903 / Tp8T 6331) protein is Nucleotide-binding protein Csac_1160.